The chain runs to 480 residues: Islet cell autoantigen 1 (480 aa).

The AH domain maps to Ala50–Glu253. Composition is skewed to basic and acidic residues over residues Leu276 to Val293 and Glu306 to Lys321. 2 disordered regions span residues Leu276–Gly338 and Leu400–Ala421.

It localises to the cytoplasm. The protein resides in the cytosol. Its subcellular location is the golgi apparatus membrane. It is found in the cytoplasmic vesicle. The protein localises to the secretory vesicle membrane. It localises to the secretory vesicle. The protein resides in the synaptic vesicle membrane. In terms of biological role, may play a role in neurotransmitter secretion. In Rattus norvegicus (Rat), this protein is Islet cell autoantigen 1.